The chain runs to 318 residues: Ubiquitin-like domain-containing CTD phosphatase 1 (318 aa).

The residue at position 2 (alanine 2) is an N-acetylalanine. One can recognise a Ubiquitin-like domain in the interval 3–81 (LPIIVKWGGQ…IMMMGTREES (79 aa)). At lysine 117 the chain carries N6-acetyllysine. The region spanning 133–294 (PREGKKLLVL…LKLTQYLKEI (162 aa)) is the FCP1 homology domain. Mg(2+) contacts are provided by aspartate 143, aspartate 145, and aspartate 253.

Mg(2+) is required as a cofactor.

The protein localises to the nucleus. The catalysed reaction is O-phospho-L-seryl-[protein] + H2O = L-seryl-[protein] + phosphate. The enzyme catalyses O-phospho-L-threonyl-[protein] + H2O = L-threonyl-[protein] + phosphate. Functionally, dephosphorylates 26S nuclear proteasomes, thereby decreasing their proteolytic activity. Recruited to the 19S regulatory particle of the 26S proteasome through its interaction with 19S component PSMD2/RPN1. Once recruited, dephosphorylates 19S component PSMC2/RPT1 which impairs PSMC2 ATPase activity and disrupts 26S proteasome assembly. Has also been reported to stimulate the proteolytic activity of the 26S proteasome. This chain is Ubiquitin-like domain-containing CTD phosphatase 1 (UBLCP1), found in Bos taurus (Bovine).